Here is a 260-residue protein sequence, read N- to C-terminus: Collagenase (260 aa).

A signal peptide spans 1 to 16 (MKFLLVFALALATTSA). Residues 17–30 (FQHPASIFELREGR) constitute a propeptide that is removed on maturation. In terms of domain architecture, Peptidase S1 spans 31 to 257 (IINGYEAYTG…YMDWIQQNTG (227 aa)). A disulfide bridge connects residues Cys-60 and Cys-76. Residues His-75 and Asp-118 each act as charge relay system in the active site. 2 disulfide bridges follow: Cys-181–Cys-196 and Cys-206–Cys-234. Residue Ser-210 is the Charge relay system of the active site.

This sequence belongs to the peptidase S1 family.

It is found in the secreted. It catalyses the reaction Hydrolysis of proteins including native collagen at Xaa-|-Ala bond leaving an N-terminal (75%) and a C-terminal (25%) fragment.. Its activity is regulated as follows. Inhibited by diisopropylfluorophosphate. Functionally, this enzyme is a serine protease capable of degrading the native triple helix of collagen. Also cleaves the B chain of insulin at the 15-Leu-|-Try-16 and 22-Arg-|-Gly-23 bonds. Hydrolyzes casein, but not Px-Pro-Leu-Gly-Pro-DArg, BzArgNHPh, AcTyrNHPh, 2-naphthyl phosphate, 2-naphthyl butyrate, 2-naphthyl caprylate, 2-naphthyl myristate, L-leucine 2-2-naphthylamide, L-valine 2-naphthylamide, L-cysteine 2-naphthylamide or L-glutarylphenylalanine 2-naphthylamide. This Hypoderma lineatum (Early cattle grub) protein is Collagenase.